Consider the following 60-residue polypeptide: MKMGNLICTCLFSSKENTNARTTDSLTSYPLPDQHISIRTFRELNQAPTSRRTSTKTAIP.

The protein belongs to the geminiviridae protein AC4/C4 family.

Its function is as follows. Pathogenicity determinant. May act as a suppressor of RNA-mediated gene silencing, also known as post-transcriptional gene silencing (PTGS), a mechanism of plant viral defense that limits the accumulation of viral RNAs. The chain is Protein AC4 from Pepper huasteco yellow vein virus (PHYVV).